The chain runs to 497 residues: Glycerol kinase (497 aa).

Thr13 provides a ligand contact to ADP. Positions 13, 14, and 15 each coordinate ATP. Thr13 contacts sn-glycerol 3-phosphate. Arg17 is a binding site for ADP. The sn-glycerol 3-phosphate site is built by Arg83, Glu84, and Tyr135. Residues Arg83, Glu84, and Tyr135 each contribute to the glycerol site. Position 231 is a phosphohistidine; by HPr (His231). Sn-glycerol 3-phosphate is bound at residue Asp245. Residues Asp245 and Gln246 each coordinate glycerol. ADP contacts are provided by Thr267 and Gly310. The ATP site is built by Thr267, Gly310, Gln314, and Gly411. ADP is bound by residues Gly411 and Asn415.

Belongs to the FGGY kinase family. Homotetramer and homodimer (in equilibrium). In terms of processing, the phosphoenolpyruvate-dependent sugar phosphotransferase system (PTS), including enzyme I, and histidine-containing protein (HPr) are required for the phosphorylation, which leads to the activation of the enzyme.

The catalysed reaction is glycerol + ATP = sn-glycerol 3-phosphate + ADP + H(+). Its pathway is polyol metabolism; glycerol degradation via glycerol kinase pathway; sn-glycerol 3-phosphate from glycerol: step 1/1. Its activity is regulated as follows. Activated by phosphorylation and inhibited by fructose 1,6-bisphosphate (FBP). Functionally, key enzyme in the regulation of glycerol uptake and metabolism. Catalyzes the phosphorylation of glycerol to yield sn-glycerol 3-phosphate. The sequence is that of Glycerol kinase from Listeria monocytogenes serotype 4a (strain HCC23).